The primary structure comprises 233 residues: ATP-dependent Clp protease proteolytic subunit 1 (233 aa).

The active-site Nucleophile is the S116. Residue H141 is part of the active site.

It belongs to the peptidase S14 family. As to quaternary structure, fourteen ClpP subunits assemble into 2 heptameric rings which stack back to back to give a disk-like structure with a central cavity, resembling the structure of eukaryotic proteasomes.

It is found in the cytoplasm. It carries out the reaction Hydrolysis of proteins to small peptides in the presence of ATP and magnesium. alpha-casein is the usual test substrate. In the absence of ATP, only oligopeptides shorter than five residues are hydrolyzed (such as succinyl-Leu-Tyr-|-NHMec, and Leu-Tyr-Leu-|-Tyr-Trp, in which cleavage of the -Tyr-|-Leu- and -Tyr-|-Trp bonds also occurs).. Its function is as follows. Cleaves peptides in various proteins in a process that requires ATP hydrolysis. Has a chymotrypsin-like activity. Plays a major role in the degradation of misfolded proteins. This is ATP-dependent Clp protease proteolytic subunit 1 from Salinibacter ruber (strain DSM 13855 / M31).